Here is a 697-residue protein sequence, read N- to C-terminus: Elongation factor G 2 (697 aa).

The region spanning 5 to 280 is the tr-type G domain; the sequence is SKYRNIGIFA…AVVDYLPAPD (276 aa). GTP is bound by residues 14-21, 78-82, and 132-135; these read AHVDAGKT, DTPGH, and NKLD.

It belongs to the TRAFAC class translation factor GTPase superfamily. Classic translation factor GTPase family. EF-G/EF-2 subfamily.

Its subcellular location is the cytoplasm. Its function is as follows. Catalyzes the GTP-dependent ribosomal translocation step during translation elongation. During this step, the ribosome changes from the pre-translocational (PRE) to the post-translocational (POST) state as the newly formed A-site-bound peptidyl-tRNA and P-site-bound deacylated tRNA move to the P and E sites, respectively. Catalyzes the coordinated movement of the two tRNA molecules, the mRNA and conformational changes in the ribosome. The sequence is that of Elongation factor G 2 from Shewanella denitrificans (strain OS217 / ATCC BAA-1090 / DSM 15013).